Here is a 642-residue protein sequence, read N- to C-terminus: Transcription factor 4 (642 aa).

A compositionally biased stretch (polar residues) spans 1 to 25 (MFSPPVSSGKNGPTSLASGHFTGSN). Residues 1 to 59 (MFSPPVSSGKNGPTSLASGHFTGSNVEDRSSSGSWGNGGHPSPSRNYGDGTPYDHMTSR) form an essential for MYOD1 inhibition region. Disordered regions lie at residues 1-296 (MFSP…SQTG), 311-354 (HTNN…EGPL), 444-545 (PNQV…MANN), and 609-642 (KRRE…MGQM). A phosphoserine mark is found at serine 42, serine 63, and serine 68. 5 stretches are compositionally biased toward polar residues: residues 83–98 (GSYS…QGCH), 112–130 (GTLS…SSNN), 181–191 (PAASTFPSSFF), 218–230 (GSSS…SSYC), and 241–281 (PSHS…TDSI). Residues 312–323 (TNNSFSSNPSTP) show a composition bias toward low complexity. The segment covering 340-349 (NGGQASSSPN) has biased composition (polar residues). At serine 347 the chain carries Phosphoserine. Positions 354–375 (LHSLQSRIEDRLERLDDAIHVL) are leucine-zipper. 2 stretches are compositionally biased toward low complexity: residues 444–455 (PNQVPVPQLPVQ) and 478–487 (GQSVSSGSSE). A Phosphoserine modification is found at serine 490. Basic and acidic residues-rich tracts occupy residues 502-517 (KSSE…KDIK) and 530-545 (PEQK…MANN). The region spanning 539-592 (ERRMANNARERLRVRDINEAFKELGRMVQLHLKSDKPQTKLLILHQAVAVILSL) is the bHLH domain. The class A specific domain stretch occupies residues 594 to 617 (QQVRERNLNPKAACLKRREEEKVS).

As to quaternary structure, efficient DNA binding requires dimerization with another bHLH protein. Forms homo- or heterooligomers with myogenin. Interacts with HIVEP2. Interacts with NEUROD2. Interacts with AGBL1. Widely expressed.

Its subcellular location is the nucleus. Functionally, transcription factor that binds to the immunoglobulin enhancer Mu-E5/KE5-motif. Involved in the initiation of neuronal differentiation. Activates transcription by binding to the E box (5'-CANNTG-3'). Binds to the thyroglobulin promoter. This Canis lupus familiaris (Dog) protein is Transcription factor 4 (TCF4).